Consider the following 234-residue polypeptide: tRNA (guanine-N(1)-)-methyltransferase (234 aa).

S-adenosyl-L-methionine is bound by residues Gly-112 and 132-137 (IGDFIL).

This sequence belongs to the RNA methyltransferase TrmD family. Homodimer.

The protein localises to the cytoplasm. It carries out the reaction guanosine(37) in tRNA + S-adenosyl-L-methionine = N(1)-methylguanosine(37) in tRNA + S-adenosyl-L-homocysteine + H(+). Specifically methylates guanosine-37 in various tRNAs. The polypeptide is tRNA (guanine-N(1)-)-methyltransferase (Campylobacter jejuni (strain RM1221)).